The primary structure comprises 652 residues: DNA ligase (652 aa).

Residues 29–33 (DSQYD), 78–79 (SL), and Glu-107 contribute to the NAD(+) site. The active-site N6-AMP-lysine intermediate is the Lys-109. Positions 130, 164, 278, and 302 each coordinate NAD(+). Residues Cys-395, Cys-398, Cys-413, and Cys-418 each coordinate Zn(2+). Positions 577–652 (STDAQLSGLT…IQDEDWLLNL (76 aa)) constitute a BRCT domain.

It belongs to the NAD-dependent DNA ligase family. LigA subfamily. The cofactor is Mg(2+). It depends on Mn(2+) as a cofactor.

The catalysed reaction is NAD(+) + (deoxyribonucleotide)n-3'-hydroxyl + 5'-phospho-(deoxyribonucleotide)m = (deoxyribonucleotide)n+m + AMP + beta-nicotinamide D-nucleotide.. Functionally, DNA ligase that catalyzes the formation of phosphodiester linkages between 5'-phosphoryl and 3'-hydroxyl groups in double-stranded DNA using NAD as a coenzyme and as the energy source for the reaction. It is essential for DNA replication and repair of damaged DNA. In Streptococcus agalactiae serotype III (strain NEM316), this protein is DNA ligase.